Consider the following 348-residue polypeptide: Phenylalanine--tRNA ligase alpha subunit (348 aa).

Glu-269 contributes to the Mg(2+) binding site.

The protein belongs to the class-II aminoacyl-tRNA synthetase family. Phe-tRNA synthetase alpha subunit type 1 subfamily. As to quaternary structure, tetramer of two alpha and two beta subunits. Mg(2+) is required as a cofactor.

It localises to the cytoplasm. The catalysed reaction is tRNA(Phe) + L-phenylalanine + ATP = L-phenylalanyl-tRNA(Phe) + AMP + diphosphate + H(+). The sequence is that of Phenylalanine--tRNA ligase alpha subunit from Dechloromonas aromatica (strain RCB).